We begin with the raw amino-acid sequence, 515 residues long: MTKRALISVSDKSGIVDFAKELKNLGWDIISTGGTKVALDDAGVETIAIDDVTGFPEMMDGRVKTLHPNIHGGLLARRDADSHLQAAKDNNIELIDLVVVNLYPFKETILRPDITYDLAVENIDIGGPSMLRSAAKNHASVTVVVDPADYATVLGELADAGQTTFETRQRLAAKVFRHTAAYDALIAEYFTTQVGEARPEKLTITYDLKQAMRYGENPQQDADFYQKALPTDYSIASAKQLNGKELSFNNIRDADAAIRIIRDFKDRPTVVVLKHMNPCGIGQADDIETAWDYAYEADPVSIFGGIVVLNREVDAATAKKMHPIFLEIIIAPSYSEEALAIFTNKKKNLRILELPFDAQAASEVEAEYTGVVGGLLVQNQDVVAENPSDWQVVTDRQPTEQEATALEFAWKAIKYVKSNGIIITNDHMTLGLGAGQTNRVGSVKIAIEQAKDHLDGTVLASDAFFPFADNIEEIAAAGIKAIIQPGGSVRDQDSIDAANKHGLTMIFTGVRHFRH.

One can recognise an MGS-like domain in the interval 1 to 145 (MTKRALISVS…KNHASVTVVV (145 aa)).

It belongs to the PurH family.

The enzyme catalyses (6R)-10-formyltetrahydrofolate + 5-amino-1-(5-phospho-beta-D-ribosyl)imidazole-4-carboxamide = 5-formamido-1-(5-phospho-D-ribosyl)imidazole-4-carboxamide + (6S)-5,6,7,8-tetrahydrofolate. The catalysed reaction is IMP + H2O = 5-formamido-1-(5-phospho-D-ribosyl)imidazole-4-carboxamide. It participates in purine metabolism; IMP biosynthesis via de novo pathway; 5-formamido-1-(5-phospho-D-ribosyl)imidazole-4-carboxamide from 5-amino-1-(5-phospho-D-ribosyl)imidazole-4-carboxamide (10-formyl THF route): step 1/1. It functions in the pathway purine metabolism; IMP biosynthesis via de novo pathway; IMP from 5-formamido-1-(5-phospho-D-ribosyl)imidazole-4-carboxamide: step 1/1. In Streptococcus pyogenes serotype M2 (strain MGAS10270), this protein is Bifunctional purine biosynthesis protein PurH.